We begin with the raw amino-acid sequence, 216 residues long: uncharacterized protein (216 aa).

The protein localises to the plastid. The protein resides in the chloroplast. This is an uncharacterized protein from Pyropia yezoensis (Susabi-nori).